The chain runs to 273 residues: Formamidopyrimidine-DNA glycosylase (273 aa).

Residue Pro-2 is the Schiff-base intermediate with DNA of the active site. Glu-3 (proton donor) is an active-site residue. Lys-58 functions as the Proton donor; for beta-elimination activity in the catalytic mechanism. DNA contacts are provided by His-91, Arg-109, and Arg-154. An FPG-type zinc finger spans residues 239–273; sequence FVYARTGEPCRICNAPVRQIVQGQRSTFYCPNCQK. Arg-263 acts as the Proton donor; for delta-elimination activity in catalysis.

It belongs to the FPG family. In terms of assembly, monomer. Zn(2+) is required as a cofactor.

It carries out the reaction Hydrolysis of DNA containing ring-opened 7-methylguanine residues, releasing 2,6-diamino-4-hydroxy-5-(N-methyl)formamidopyrimidine.. The catalysed reaction is 2'-deoxyribonucleotide-(2'-deoxyribose 5'-phosphate)-2'-deoxyribonucleotide-DNA = a 3'-end 2'-deoxyribonucleotide-(2,3-dehydro-2,3-deoxyribose 5'-phosphate)-DNA + a 5'-end 5'-phospho-2'-deoxyribonucleoside-DNA + H(+). Involved in base excision repair of DNA damaged by oxidation or by mutagenic agents. Acts as a DNA glycosylase that recognizes and removes damaged bases. Has a preference for oxidized purines, such as 7,8-dihydro-8-oxoguanine (8-oxoG). Has AP (apurinic/apyrimidinic) lyase activity and introduces nicks in the DNA strand. Cleaves the DNA backbone by beta-delta elimination to generate a single-strand break at the site of the removed base with both 3'- and 5'-phosphates. The chain is Formamidopyrimidine-DNA glycosylase from Herminiimonas arsenicoxydans.